The sequence spans 149 residues: Putative pre-16S rRNA nuclease (149 aa).

It belongs to the YqgF nuclease family.

Its subcellular location is the cytoplasm. Could be a nuclease involved in processing of the 5'-end of pre-16S rRNA. This chain is Putative pre-16S rRNA nuclease, found in Burkholderia vietnamiensis (strain G4 / LMG 22486) (Burkholderia cepacia (strain R1808)).